The sequence spans 450 residues: Phosphoglucosamine mutase (450 aa).

Ser-97 (phosphoserine intermediate) is an active-site residue. Residues Ser-97, Asp-236, Asp-238, and Asp-240 each coordinate Mg(2+). Ser-97 is subject to Phosphoserine.

This sequence belongs to the phosphohexose mutase family. It depends on Mg(2+) as a cofactor. In terms of processing, activated by phosphorylation.

The enzyme catalyses alpha-D-glucosamine 1-phosphate = D-glucosamine 6-phosphate. Functionally, catalyzes the conversion of glucosamine-6-phosphate to glucosamine-1-phosphate. This is Phosphoglucosamine mutase from Prochlorococcus marinus (strain AS9601).